The primary structure comprises 311 residues: Ketoisovalerate oxidoreductase subunit VorB (311 aa).

As to quaternary structure, heterotetramer of one alpha, one beta, one delta and one gamma chain.

The catalysed reaction is 3-methyl-2-oxobutanoate + 2 oxidized [2Fe-2S]-[ferredoxin] + CoA = 2-methylpropanoyl-CoA + 2 reduced [2Fe-2S]-[ferredoxin] + CO2 + H(+). This is Ketoisovalerate oxidoreductase subunit VorB (vorB) from Pyrococcus furiosus (strain ATCC 43587 / DSM 3638 / JCM 8422 / Vc1).